Consider the following 327-residue polypeptide: MHPQQLVVSWFSLVLLASPIVAMWELEKNVYVVELDWYPDAPGETVVLTCDTPEEDGITWTSDQSSEVLGSGKTLTIQVKEFGDAGQYTCHKGGEALSRSLLLLHKKEDGIWSTDILKDQKEPKAKSFLKCEAKDYSGHFTCWWLTAISTDLKFSVKSSRGSSDPRGVTCGAALLSAEKVSLEHREYNKYTVECQEGSACPAAEESLLIEVVVEAVHKLKYENYTSSFFIRDIIKPDPPKNLQLRPLKNSRQVEVSWEYPDTWSTPHSYFSLTFCVQVQGKNKREKKLFMDQTSAKVTCHKDANVRVQARDRYYSSFWSEWASVSCS.

An N-terminal signal peptide occupies residues 1-22 (MHPQQLVVSWFSLVLLASPIVA). Residues 23 to 106 (MWELEKNVYV…LSRSLLLLHK (84 aa)) enclose the Ig-like C2-type domain. The cysteines at positions 50 and 90 are disulfide-linked. Residue N223 is glycosylated (N-linked (GlcNAc...) asparagine). The Fibronectin type-III domain occupies 238-327 (PPKNLQLRPL…WSEWASVSCS (90 aa)).

The protein belongs to the IL-12B family. Heterodimer with IL12A; disulfide-linked. The heterodimer is known as interleukin IL-12. Heterodimer with IL23A; disulfide-linked. The heterodimer is known as interleukin IL-23. Also secreted as a monomer. Interacts with NBR1; this interaction promotes IL-12 secretion.

It is found in the secreted. Functionally, cytokine that can act as a growth factor for activated T and NK cells, enhance the lytic activity of NK/lymphokine-activated killer cells, and stimulate the production of IFN-gamma by resting PBMC. In terms of biological role, associates with IL23A to form the IL-23 interleukin, a heterodimeric cytokine which functions in innate and adaptive immunity. IL-23 may constitute with IL-17 an acute response to infection in peripheral tissues. IL-23 binds to a heterodimeric receptor complex composed of IL12RB1 and IL23R, activates the Jak-Stat signaling cascade, stimulates memory rather than naive T-cells and promotes production of pro-inflammatory cytokines. IL-23 induces autoimmune inflammation and thus may be responsible for autoimmune inflammatory diseases and may be important for tumorigenesis. The sequence is that of Interleukin-12 subunit beta (IL12B) from Bos taurus (Bovine).